Here is a 353-residue protein sequence, read N- to C-terminus: Holliday junction branch migration complex subunit RuvB (353 aa).

The large ATPase domain (RuvB-L) stretch occupies residues 1 to 183 (MNEPRIVAPQ…FGATYRLDFY (183 aa)). ATP-binding positions include Leu22, Arg23, Gly64, Lys67, Thr68, Thr69, 130-132 (EDF), Arg173, Tyr183, and Arg220. Thr68 is a binding site for Mg(2+). Residues 184-254 (DTAALRAIVE…LARLALDQLA (71 aa)) are small ATPAse domain (RuvB-S). Positions 257–353 (ELGLDEVDRL…HAASERSSDA (97 aa)) are head domain (RuvB-H). Arg312 and Arg317 together coordinate DNA.

This sequence belongs to the RuvB family. As to quaternary structure, homohexamer. Forms an RuvA(8)-RuvB(12)-Holliday junction (HJ) complex. HJ DNA is sandwiched between 2 RuvA tetramers; dsDNA enters through RuvA and exits via RuvB. An RuvB hexamer assembles on each DNA strand where it exits the tetramer. Each RuvB hexamer is contacted by two RuvA subunits (via domain III) on 2 adjacent RuvB subunits; this complex drives branch migration. In the full resolvosome a probable DNA-RuvA(4)-RuvB(12)-RuvC(2) complex forms which resolves the HJ.

The protein resides in the cytoplasm. The enzyme catalyses ATP + H2O = ADP + phosphate + H(+). In terms of biological role, the RuvA-RuvB-RuvC complex processes Holliday junction (HJ) DNA during genetic recombination and DNA repair, while the RuvA-RuvB complex plays an important role in the rescue of blocked DNA replication forks via replication fork reversal (RFR). RuvA specifically binds to HJ cruciform DNA, conferring on it an open structure. The RuvB hexamer acts as an ATP-dependent pump, pulling dsDNA into and through the RuvAB complex. RuvB forms 2 homohexamers on either side of HJ DNA bound by 1 or 2 RuvA tetramers; 4 subunits per hexamer contact DNA at a time. Coordinated motions by a converter formed by DNA-disengaged RuvB subunits stimulates ATP hydrolysis and nucleotide exchange. Immobilization of the converter enables RuvB to convert the ATP-contained energy into a lever motion, pulling 2 nucleotides of DNA out of the RuvA tetramer per ATP hydrolyzed, thus driving DNA branch migration. The RuvB motors rotate together with the DNA substrate, which together with the progressing nucleotide cycle form the mechanistic basis for DNA recombination by continuous HJ branch migration. Branch migration allows RuvC to scan DNA until it finds its consensus sequence, where it cleaves and resolves cruciform DNA. This is Holliday junction branch migration complex subunit RuvB from Thermomicrobium roseum (strain ATCC 27502 / DSM 5159 / P-2).